A 198-amino-acid chain; its full sequence is MORN repeat-containing protein 4 homolog (198 aa).

Ala-2 is subject to N-acetylalanine. A compositionally biased stretch (low complexity) spans Gln-23–Gln-45. A disordered region spans residues Gln-23–Tyr-46. MORN repeat units follow at residues Tyr-64 to Arg-87, Tyr-88 to Ala-109, Tyr-111 to Met-132, and Tyr-134 to Asp-153.

Interacts with ninaC. Phosphorylated under dark conditions and is dephosphorylated by light exposure. In terms of tissue distribution, retina. Expressed primarily in the phototransducing compartment of photoreceptor cells, the rhabdomeres and its expression is dependent on ninaC protein (at protein level).

The protein localises to the membrane. The protein resides in the cell projection. It is found in the rhabdomere membrane. Functionally, plays a role in promoting axonal degeneration following neuronal injury by toxic insult or trauma. Organizes rhabdomeric components to suppress random activation of the phototransduction cascade and thus increases the signaling fidelity of dark-adapted photoreceptors. The rtp/ninaC complex is required for stability of inad and inac and the normal termination of phototransduction in the retina. The chain is MORN repeat-containing protein 4 homolog from Drosophila melanogaster (Fruit fly).